A 1487-amino-acid polypeptide reads, in one-letter code: Golgin subfamily A member 3 (1487 aa).

M1 is modified (N-acetylmethionine). A disordered region spans residues M1–K118. 2 positions are modified to phosphoserine: S18 and S60. The span at D62–Q74 shows a compositional bias: polar residues. Residues L121 to S141 form an interaction with GOPC region. Residues E172–S257 are golgi-targeting domain. Disordered regions lie at residues P221–S321 and A365–S394. Low complexity-rich tracts occupy residues S269–S288, S312–S321, and A365–A375. Residue S270 is modified to Phosphoserine. The stretch at K358–S1454 forms a coiled coil. Phosphoserine is present on residues S381, S385, and S461. Residues K785 to E796 are compositionally biased toward basic and acidic residues. A disordered region spans residues K785–G804. S979 carries the phosphoserine modification. Positions R1372 to G1382 are enriched in basic and acidic residues. Disordered stretches follow at residues R1372–P1396 and V1458–Q1487. S1387 is subject to Phosphoserine. Positions P1462–L1474 are enriched in basic and acidic residues. Phosphoserine is present on S1479.

In terms of assembly, homodimer. Interacts with GOLGA7. Interacts with GOPC. Cleaved by caspases in apoptotic cells. As to expression, highly expressed in testis. Transcripts can be found in spermatids during spermatogenesis. No expression in Leydig cells, spermatogonia or spermatocytes. Detected at low levels in all tissues.

The protein resides in the cytoplasm. It localises to the golgi apparatus. The protein localises to the golgi stack membrane. Functionally, plays an important role in spermatogenesis and/or testis development. Probably identical with the serologically detectable male antigen (SDM). Probably involved in maintaining Golgi structure. The polypeptide is Golgin subfamily A member 3 (Golga3) (Mus musculus (Mouse)).